We begin with the raw amino-acid sequence, 306 residues long: 4-diphosphocytidyl-2-C-methyl-D-erythritol kinase (306 aa).

The active site involves Lys-11. Position 113–123 (113–123 (PPEGGIGGGSS)) interacts with ATP. Asp-153 is a catalytic residue.

The protein belongs to the GHMP kinase family. IspE subfamily.

It catalyses the reaction 4-CDP-2-C-methyl-D-erythritol + ATP = 4-CDP-2-C-methyl-D-erythritol 2-phosphate + ADP + H(+). Its pathway is isoprenoid biosynthesis; isopentenyl diphosphate biosynthesis via DXP pathway; isopentenyl diphosphate from 1-deoxy-D-xylulose 5-phosphate: step 3/6. Its function is as follows. Catalyzes the phosphorylation of the position 2 hydroxy group of 4-diphosphocytidyl-2C-methyl-D-erythritol. This chain is 4-diphosphocytidyl-2-C-methyl-D-erythritol kinase, found in Leptospira biflexa serovar Patoc (strain Patoc 1 / ATCC 23582 / Paris).